The primary structure comprises 707 residues: Anti-sigma-I factor RsgI9 (707 aa).

At 1–149 (MKITGVIVRI…NFSRISNIKN (149 aa)) the chain is on the cytoplasmic side. The 48-residue stretch at 3–50 (ITGVIVRIHKDRAIIRTDDNRLLAVKRHNDMMVGQIVSFDANEVHKVE) folds into the RsgI N-terminal anti-sigma domain. A helical transmembrane segment spans residues 150-172 (FSRIASIAAAFVLIFLFGRNVML). Residues 173-707 (NNSSDSEYAY…DSEEKKEYIQ (535 aa)) are Extracellular-facing. A coiled-coil region spans residues 256-283 (NDKNKKTRDKREEKIDELKETIEQGIEA). The segment at 345-392 (EDNTELAPTPTPVPPETPEPTPTPTASEATPSNSPVESKSPEAVPELG) is disordered. Pro residues predominate over residues 353-367 (TPTPVPPETPEPTPT). A compositionally biased stretch (low complexity) spans 368–379 (PTASEATPSNSP).

The protein localises to the cell membrane. In Acetivibrio thermocellus (strain ATCC 27405 / DSM 1237 / JCM 9322 / NBRC 103400 / NCIMB 10682 / NRRL B-4536 / VPI 7372) (Clostridium thermocellum), this protein is Anti-sigma-I factor RsgI9.